The following is a 386-amino-acid chain: V-type proton ATPase subunit B 2 (386 aa).

It belongs to the ATPase alpha/beta chains family. V-ATPase is a heteromultimeric enzyme composed of a peripheral catalytic V1 complex (main components: subunits A, B, C, D, E, and F) attached to an integral membrane V0 proton pore complex (main component: the proteolipid protein).

Functionally, non-catalytic subunit of the peripheral V1 complex of vacuolar ATPase. V-ATPase is responsible for acidifying a variety of intracellular compartments in eukaryotic cells. The chain is V-type proton ATPase subunit B 2 from Gossypium hirsutum (Upland cotton).